Here is a 105-residue protein sequence, read N- to C-terminus: Nucleoid-associated protein TTHA1599 (105 aa).

The protein belongs to the YbaB/EbfC family. In terms of assembly, homodimer.

It is found in the cytoplasm. The protein localises to the nucleoid. In terms of biological role, binds to DNA and alters its conformation. May be involved in regulation of gene expression, nucleoid organization and DNA protection. The sequence is that of Nucleoid-associated protein TTHA1599 from Thermus thermophilus (strain ATCC 27634 / DSM 579 / HB8).